Here is a 786-residue protein sequence, read N- to C-terminus: DNA ligase (786 aa).

NAD(+) contacts are provided by residues 32–36 (DAEYD), 81–82 (SL), and Glu-121. The active-site N6-AMP-lysine intermediate is Lys-123. NAD(+) is bound by residues Arg-144, Glu-181, Lys-297, and Lys-321. Zn(2+) contacts are provided by Cys-415, Cys-418, Cys-445, and Cys-451. Positions 703–786 (AEGLPLAGQT…EQLKSYGIEA (84 aa)) constitute a BRCT domain.

This sequence belongs to the NAD-dependent DNA ligase family. LigA subfamily. Requires Mg(2+) as cofactor. Mn(2+) serves as cofactor.

The enzyme catalyses NAD(+) + (deoxyribonucleotide)n-3'-hydroxyl + 5'-phospho-(deoxyribonucleotide)m = (deoxyribonucleotide)n+m + AMP + beta-nicotinamide D-nucleotide.. DNA ligase that catalyzes the formation of phosphodiester linkages between 5'-phosphoryl and 3'-hydroxyl groups in double-stranded DNA using NAD as a coenzyme and as the energy source for the reaction. It is essential for DNA replication and repair of damaged DNA. This chain is DNA ligase, found in Ectopseudomonas mendocina (strain ymp) (Pseudomonas mendocina).